Here is a 165-residue protein sequence, read N- to C-terminus: 2-C-methyl-D-erythritol 2,4-cyclodiphosphate synthase (165 aa).

Positions 12 and 14 each coordinate a divalent metal cation. Residues 12-14 (DIH) and 38-39 (HS) each bind 4-CDP-2-C-methyl-D-erythritol 2-phosphate. Histidine 46 contributes to the a divalent metal cation binding site. 4-CDP-2-C-methyl-D-erythritol 2-phosphate is bound by residues 60–62 (DIG), 136–139 (TTNE), and arginine 146.

It belongs to the IspF family. As to quaternary structure, homotrimer. Requires a divalent metal cation as cofactor.

The catalysed reaction is 4-CDP-2-C-methyl-D-erythritol 2-phosphate = 2-C-methyl-D-erythritol 2,4-cyclic diphosphate + CMP. The protein operates within isoprenoid biosynthesis; isopentenyl diphosphate biosynthesis via DXP pathway; isopentenyl diphosphate from 1-deoxy-D-xylulose 5-phosphate: step 4/6. In terms of biological role, involved in the biosynthesis of isopentenyl diphosphate (IPP) and dimethylallyl diphosphate (DMAPP), two major building blocks of isoprenoid compounds. Catalyzes the conversion of 4-diphosphocytidyl-2-C-methyl-D-erythritol 2-phosphate (CDP-ME2P) to 2-C-methyl-D-erythritol 2,4-cyclodiphosphate (ME-CPP) with a corresponding release of cytidine 5-monophosphate (CMP). This Nostoc sp. (strain PCC 7120 / SAG 25.82 / UTEX 2576) protein is 2-C-methyl-D-erythritol 2,4-cyclodiphosphate synthase.